Here is a 53-residue protein sequence, read N- to C-terminus: MLNVEVPTIGVSLIFLAYDEALALMTFIAVNAVLSLILIRAVILDAEYKENNQ.

Residues 24 to 44 (LMTFIAVNAVLSLILIRAVIL) traverse the membrane as a helical segment.

The protein localises to the membrane. This is an uncharacterized protein from Methanocaldococcus jannaschii (strain ATCC 43067 / DSM 2661 / JAL-1 / JCM 10045 / NBRC 100440) (Methanococcus jannaschii).